The sequence spans 388 residues: Gastricsin (388 aa).

An N-terminal signal peptide occupies residues Met1 to Ala16. Positions Thr17–Leu59 are cleaved as a propeptide — activation peptide. The Peptidase A1 domain occupies Tyr73–Ala385. The active site involves Asp91. Cystine bridges form between Cys104-Cys109 and Cys267-Cys271. Residue Asp276 is part of the active site. A disulfide bond links Cys310 and Cys343.

It belongs to the peptidase A1 family.

The protein resides in the secreted. It catalyses the reaction More restricted specificity than pepsin A, but shows preferential cleavage at Tyr-|-Xaa bonds. High activity on hemoglobin.. With respect to regulation, inhibited by pepstatin. In terms of biological role, hydrolyzes a variety of proteins. The protein is Gastricsin (PGC) of Callithrix jacchus (White-tufted-ear marmoset).